The following is a 306-amino-acid chain: Curved DNA-binding protein (306 aa).

Positions 5-69 (DYYAIMGVKP…QRRAEYDQMW (65 aa)) constitute a J domain.

It localises to the cytoplasm. The protein localises to the nucleoid. In terms of biological role, DNA-binding protein that preferentially recognizes a curved DNA sequence. It is probably a functional analog of DnaJ; displays overlapping activities with DnaJ, but functions under different conditions, probably acting as a molecular chaperone in an adaptive response to environmental stresses other than heat shock. Lacks autonomous chaperone activity; binds native substrates and targets them for recognition by DnaK. Its activity is inhibited by the binding of CbpM. The polypeptide is Curved DNA-binding protein (Escherichia coli (strain SMS-3-5 / SECEC)).